We begin with the raw amino-acid sequence, 346 residues long: uncharacterized protein (346 aa).

Residues Ala7–Val27 form a helical membrane-spanning segment. Residues Glu29–Lys48 form a disordered region. A compositionally biased stretch (polar residues) spans Ser35–Ala44. The region spanning Leu231–Phe342 is the SCP domain.

It is found in the cell membrane. This is an uncharacterized protein from Bacillus subtilis (strain 168).